The following is a 98-amino-acid chain: Cystatin-B (98 aa).

Position 1 is an N-acetylmethionine (methionine 1). Residues glutamine 46–glycine 50 carry the Secondary area of contact motif.

The protein belongs to the cystatin family. In terms of assembly, able to form dimers stabilized by noncovalent forces.

The protein localises to the cytoplasm. It localises to the nucleus. Functionally, this is an intracellular thiol proteinase inhibitor. Tightly binding reversible inhibitor of cathepsins L, H and B. The protein is Cystatin-B (CSTB) of Macaca fuscata fuscata (Japanese macaque).